The following is a 1286-amino-acid chain: DNA-directed RNA polymerase 147 kDa polypeptide (1286 aa).

This sequence belongs to the poxviridae DNA-directed RNA polymerase 147 kDa subunit family. In terms of assembly, the DNA-dependent RNA polymerase used for intermediate and late genes expression consists of eight subunits Rpo30/OPG66, Rpo7/OPG90, Rpo22/OPG103, Rpo147/OPG105, Rpo18/OPG119, Rpo19/OPG131, Rpo132/OPG151 and Rpo35/OPG156. The same holoenzyme, with the addition of the transcription-specificity factor OPG109, is used for early gene expression.

The protein resides in the virion. The catalysed reaction is RNA(n) + a ribonucleoside 5'-triphosphate = RNA(n+1) + diphosphate. Its function is as follows. Part of the DNA-dependent RNA polymerase which catalyzes the transcription of viral DNA into RNA using the four ribonucleoside triphosphates as substrates. Responsible for the transcription of early, intermediate and late genes. DNA-dependent RNA polymerase associates with the early transcription factor (ETF), itself composed of OPG118 and OPG133, thereby allowing the early genes transcription. Late transcription, and probably also intermediate transcription, require newly synthesized RNA polymerase. The sequence is that of DNA-directed RNA polymerase 147 kDa polypeptide (OPG105) from Vaccinia virus (strain Ankara) (VACV).